A 374-amino-acid polypeptide reads, in one-letter code: 4-hydroxy-3-methylbut-2-en-1-yl diphosphate synthase (flavodoxin) (374 aa).

[4Fe-4S] cluster is bound by residues C268, C271, C303, and E310.

It belongs to the IspG family. It depends on [4Fe-4S] cluster as a cofactor.

The enzyme catalyses (2E)-4-hydroxy-3-methylbut-2-enyl diphosphate + oxidized [flavodoxin] + H2O + 2 H(+) = 2-C-methyl-D-erythritol 2,4-cyclic diphosphate + reduced [flavodoxin]. Its pathway is isoprenoid biosynthesis; isopentenyl diphosphate biosynthesis via DXP pathway; isopentenyl diphosphate from 1-deoxy-D-xylulose 5-phosphate: step 5/6. In terms of biological role, converts 2C-methyl-D-erythritol 2,4-cyclodiphosphate (ME-2,4cPP) into 1-hydroxy-2-methyl-2-(E)-butenyl 4-diphosphate. The sequence is that of 4-hydroxy-3-methylbut-2-en-1-yl diphosphate synthase (flavodoxin) from Geobacillus thermodenitrificans (strain NG80-2).